The chain runs to 201 residues: MAIILPELPYAYDALEPQFDAETMSLHHDKHHATYVANTNAALEKHPEIGENLEELLADVTKIPEDIRQALINNGGGHLNHALFWELLSPEKQDVTPDVAQAIDDAFGSFDAFKEQFTAAATGRFGSGWAWLVVNKEGQLEITSTANQDTPISEGKKPILALDVWEHAYYLNYRNVRPNYIKAFFEIINWKKVSELYQAAK.

4 residues coordinate Mn(2+): His-27, His-81, Asp-163, and His-167.

It belongs to the iron/manganese superoxide dismutase family. As to quaternary structure, homodimer. The cofactor is Mn(2+).

It localises to the secreted. The catalysed reaction is 2 superoxide + 2 H(+) = H2O2 + O2. Its function is as follows. Destroys superoxide anion radicals which are normally produced within the cells and which are toxic to biological systems. This Streptococcus pyogenes serotype M18 (strain MGAS8232) protein is Superoxide dismutase [Mn] (sodA).